A 347-amino-acid polypeptide reads, in one-letter code: Dihydroorotase (347 aa).

Zn(2+) is bound by residues histidine 14 and histidine 16. Residues 16 to 18 (HLR) and asparagine 42 each bind substrate. Zn(2+)-binding residues include lysine 100, histidine 137, and histidine 175. Lysine 100 is modified (N6-carboxylysine). Histidine 137 serves as a coordination point for substrate. A substrate-binding site is contributed by leucine 220. Aspartate 248 lines the Zn(2+) pocket. The active site involves aspartate 248. Positions 252 and 264 each coordinate substrate.

Belongs to the metallo-dependent hydrolases superfamily. DHOase family. Class II DHOase subfamily. As to quaternary structure, homodimer. Zn(2+) is required as a cofactor.

The catalysed reaction is (S)-dihydroorotate + H2O = N-carbamoyl-L-aspartate + H(+). It participates in pyrimidine metabolism; UMP biosynthesis via de novo pathway; (S)-dihydroorotate from bicarbonate: step 3/3. Functionally, catalyzes the reversible cyclization of carbamoyl aspartate to dihydroorotate. In Jannaschia sp. (strain CCS1), this protein is Dihydroorotase.